We begin with the raw amino-acid sequence, 117 residues long: Large ribosomal subunit protein bL20 (117 aa).

Belongs to the bacterial ribosomal protein bL20 family.

Its function is as follows. Binds directly to 23S ribosomal RNA and is necessary for the in vitro assembly process of the 50S ribosomal subunit. It is not involved in the protein synthesizing functions of that subunit. In Idiomarina loihiensis (strain ATCC BAA-735 / DSM 15497 / L2-TR), this protein is Large ribosomal subunit protein bL20.